The chain runs to 950 residues: Glycine dehydrogenase (decarboxylating) (950 aa).

An N6-(pyridoxal phosphate)lysine modification is found at K698.

The protein belongs to the GcvP family. As to quaternary structure, the glycine cleavage system is composed of four proteins: P, T, L and H. The cofactor is pyridoxal 5'-phosphate.

It catalyses the reaction N(6)-[(R)-lipoyl]-L-lysyl-[glycine-cleavage complex H protein] + glycine + H(+) = N(6)-[(R)-S(8)-aminomethyldihydrolipoyl]-L-lysyl-[glycine-cleavage complex H protein] + CO2. Functionally, the glycine cleavage system catalyzes the degradation of glycine. The P protein binds the alpha-amino group of glycine through its pyridoxal phosphate cofactor; CO(2) is released and the remaining methylamine moiety is then transferred to the lipoamide cofactor of the H protein. The chain is Glycine dehydrogenase (decarboxylating) from Neisseria gonorrhoeae (strain ATCC 700825 / FA 1090).